A 137-amino-acid chain; its full sequence is Lysozyme (137 aa).

The N-terminal stretch at 1-18 is a signal peptide; the sequence is MQKLIIFALVVLCVGSEA. Positions 19–137 constitute a C-type lysozyme domain; sequence KTFTRCGLVH…QGSLPDISSC (119 aa). Disulfide bonds link Cys24-Cys137, Cys45-Cys127, Cys79-Cys93, and Cys89-Cys107. Residues Glu50 and Asp67 contribute to the active site.

It belongs to the glycosyl hydrolase 22 family.

It carries out the reaction Hydrolysis of (1-&gt;4)-beta-linkages between N-acetylmuramic acid and N-acetyl-D-glucosamine residues in a peptidoglycan and between N-acetyl-D-glucosamine residues in chitodextrins.. Functionally, lysozymes have primarily a bacteriolytic function; those in tissues and body fluids are associated with the monocyte-macrophage system and enhance the activity of immunoagents. Active against E.coli and M.luteus. In Bombyx mori (Silk moth), this protein is Lysozyme.